Reading from the N-terminus, the 504-residue chain is MEEFKRYFELDRSQQHDFIYPLIFQEYIYALAHDRDLNRSIFFESAGYDKKYSFLIVKRLITHLITQMYQQNHFYTNDSNQNKFLGYNTNLYSQMIFEGFAVVVEIPFYLRFRSFLEGKERVKSHNLRSLHSIFPFLEDKFSHLNYVLDILIPHSIHLEILVQTLRYWVKXPSSLHLLRFFLHEYPNRNSLITPKKSSFSFSKRNQRFFLLLYNFHVCEYESIFVFLRNQSSHLCSISSETFIERISFYKKIKLEVFTKDFKAILWVFKDPFLHYVRYRGKSILXSKGSSLLMNKWKYYLVNFWECYFYMWSQSRRIHIXQLSKNSLDFLGYLSSVRLKPSMVRSQMIENSFLIENASKKFDSLVXITPMIASLSKAXFXNVLGHPMSKPVWADLSDSDIIDRFGRIYRNLSHYHSGSLQKMSLYRIKYILRLSCARTLARKHKSTVRAFLKRLGVGLLEEFFTEEEQVFYLTFPKASXTIGKLYRRRIGYEDIFXXXDPXNHE.

Belongs to the intron maturase 2 family. MatK subfamily.

It is found in the plastid. The protein localises to the chloroplast. In terms of biological role, usually encoded in the trnK tRNA gene intron. Probably assists in splicing its own and other chloroplast group II introns. In Prionotes cerinthoides (Climbing heath), this protein is Maturase K.